Reading from the N-terminus, the 201-residue chain is Ras-related protein Rab-5A (201 aa).

GTP is bound by residues 16-24 (GEAAVGKSS), 35-41 (LDYQEST), 64-68 (DTAGQ), 122-125 (NKLD), and 152-154 (SAK). An Effector region motif is present at residues 38–46 (QESTIGAAF). S-geranylgeranyl cysteine attachment occurs at residues C199 and C200.

Belongs to the small GTPase superfamily. Rab family.

It localises to the cell membrane. The protein resides in the endosome membrane. Its activity is regulated as follows. Regulated by guanine nucleotide exchange factors (GEFs) which promote the exchange of bound GDP for free GTP. Its function is as follows. Required for the fusion of plasma membranes and early endosomes. In Dictyostelium discoideum (Social amoeba), this protein is Ras-related protein Rab-5A (rab5A).